Consider the following 195-residue polypeptide: Large ribosomal subunit protein uL5 (195 aa).

Positions 1-25 are disordered; that stretch reads MARVPPPALKKDKKEKKPPKDNSKN.

It belongs to the universal ribosomal protein uL5 family. In terms of assembly, component of the large ribosomal subunit.

It localises to the nucleus. The protein localises to the cytoplasm. Component of the ribosome, a large ribonucleoprotein complex responsible for the synthesis of proteins in the cell. The small ribosomal subunit (SSU) binds messenger RNAs (mRNAs) and translates the encoded message by selecting cognate aminoacyl-transfer RNA (tRNA) molecules. The large subunit (LSU) contains the ribosomal catalytic site termed the peptidyl transferase center (PTC), which catalyzes the formation of peptide bonds, thereby polymerizing the amino acids delivered by tRNAs into a polypeptide chain. The nascent polypeptides leave the ribosome through a tunnel in the LSU and interact with protein factors that function in enzymatic processing, targeting, and the membrane insertion of nascent chains at the exit of the ribosomal tunnel. The sequence is that of Large ribosomal subunit protein uL5 (RpL11) from Spodoptera frugiperda (Fall armyworm).